Consider the following 508-residue polypeptide: Catalase (508 aa).

Residues histidine 63 and asparagine 136 contribute to the active site. Tyrosine 346 is a heme binding site.

This sequence belongs to the catalase family. In terms of assembly, homohexamer. The cofactor is heme.

It localises to the cytoplasm. The enzyme catalyses 2 H2O2 = O2 + 2 H2O. Functionally, decomposes hydrogen peroxide into water and oxygen; serves to protect cells from the toxic effects of hydrogen peroxide. The sequence is that of Catalase (katA) from Haemophilus influenzae (strain ATCC 51907 / DSM 11121 / KW20 / Rd).